A 171-amino-acid polypeptide reads, in one-letter code: Co-chaperone protein HscB (171 aa).

The 73-residue stretch at 2–74 folds into the J domain; it reads DYFTLFGLPA…LTRAEYLLSL (73 aa).

This sequence belongs to the HscB family. In terms of assembly, interacts with HscA and stimulates its ATPase activity. Interacts with IscU.

Functionally, co-chaperone involved in the maturation of iron-sulfur cluster-containing proteins. Seems to help targeting proteins to be folded toward HscA. This Salmonella paratyphi A (strain AKU_12601) protein is Co-chaperone protein HscB.